The sequence spans 1128 residues: Major DNA-binding protein (1128 aa).

A required for nuclear localization region spans residues 1104-1128; it reads LGGGGQGSGGRRKRRLATVLPGLEV.

The protein belongs to the herpesviridae major DNA-binding protein family. As to quaternary structure, homooligomers. Forms double-helical filaments necessary for the formation of replication compartments within the host nucleus. Interacts with the origin-binding protein. Interacts with the helicase primase complex; this interaction stimulates primer synthesis activity of the helicase-primase complex. Interacts with the DNA polymerase. Interacts with the alkaline exonuclease; this interaction increases its nuclease processivity.

It is found in the virion tegument. The protein resides in the host nucleus. Its function is as follows. Plays several crucial roles in viral infection. Participates in the opening of the viral DNA origin to initiate replication by interacting with the origin-binding protein. May disrupt loops, hairpins and other secondary structures present on ssDNA to reduce and eliminate pausing of viral DNA polymerase at specific sites during elongation. Promotes viral DNA recombination by performing strand-transfer, characterized by the ability to transfer a DNA strand from a linear duplex to a complementary single-stranded DNA circle. Can also catalyze the renaturation of complementary single strands. Additionally, reorganizes the host cell nucleus, leading to the formation of prereplicative sites and replication compartments. This process is driven by the protein which can form double-helical filaments in the absence of DNA. The protein is Major DNA-binding protein of Homo sapiens (Human).